Reading from the N-terminus, the 157-residue chain is Transcription elongation factor GreA (157 aa).

A coiled-coil region spans residues 46 to 67; the sequence is AEYHAARERQSFIEGRIKELED.

It belongs to the GreA/GreB family.

Functionally, necessary for efficient RNA polymerase transcription elongation past template-encoded arresting sites. The arresting sites in DNA have the property of trapping a certain fraction of elongating RNA polymerases that pass through, resulting in locked ternary complexes. Cleavage of the nascent transcript by cleavage factors such as GreA or GreB allows the resumption of elongation from the new 3'terminus. GreA releases sequences of 2 to 3 nucleotides. In Rhodospirillum rubrum (strain ATCC 11170 / ATH 1.1.1 / DSM 467 / LMG 4362 / NCIMB 8255 / S1), this protein is Transcription elongation factor GreA.